Reading from the N-terminus, the 182-residue chain is SAGA-associated factor 11 homolog (182 aa).

The disordered stretch occupies residues 61-84; the sequence is GSGAAVEGEPEDSKPYTIVDQPDT. The segment at 98-119 adopts an SGF11-type zinc-finger fold; it reads CHCPNCNRIVAASRFAPHLEKC. The tract at residues 133–182 is disordered; that stretch reads RIANTRDVGTGNYFGGDEDDEDDADWSGEKRKKKISQVRTNGSKKNGKTS. The span at 148 to 158 shows a compositional bias: acidic residues; it reads GDEDDEDDADW.

This sequence belongs to the SGF11 family. As to quaternary structure, component of some SAGA transcription coactivator-HAT complexes. Within the SAGA complex, participates in a subcomplex of SAGA called the DUB module (deubiquitination module).

It localises to the nucleus. Its function is as follows. Component of the transcription regulatory histone acetylation (HAT) complex SAGA, a multiprotein complex that activates transcription by remodeling chromatin and mediating histone acetylation and deubiquitination. Within the SAGA complex, participates in a subcomplex that specifically deubiquitinates histone H2B. The SAGA complex is recruited to specific gene promoters by activators, where it is required for transcription. In Anopheles gambiae (African malaria mosquito), this protein is SAGA-associated factor 11 homolog.